A 941-amino-acid chain; its full sequence is Gamma-aminobutyric acid type B receptor subunit 2 (941 aa).

Residues 1 to 41 (MASPRSSGQPGPPPPPPPPPARLLLLLLLPLLLPLAPGAWG) form the signal peptide. The Extracellular segment spans residues 42–483 (WARGAPRPPP…LRKISLPLYS (442 aa)). N-linked (GlcNAc...) asparagine glycosylation is present at asparagine 90. 3 disulfides stabilise this stretch: cysteine 108-cysteine 135, cysteine 237-cysteine 266, and cysteine 265-cysteine 302. 4 N-linked (GlcNAc...) asparagine glycosylation sites follow: asparagine 298, asparagine 389, asparagine 404, and asparagine 453. Residues 484-504 (ILSALTILGMIMASAFLFFNI) form a helical membrane-spanning segment. Residues 505 to 522 (KNRNQKLIKMSSPYMNNL) are Cytoplasmic-facing. Residues 523 to 543 (IILGGMLSYASIFLFGLDGSF) traverse the membrane as a helical segment. The Extracellular portion of the chain corresponds to 544 to 551 (VSEKTFET). Residues 552-572 (LCTVRTWILTVGYTTAFGAMF) traverse the membrane as a helical segment. At 573–597 (AKTWRVHAIFKNVKMKKKIIKDQKL) the chain is on the cytoplasmic side. Residues 598-618 (LVIVGGMLLIDLCILICWQAV) form a helical membrane-spanning segment. The Extracellular portion of the chain corresponds to 619–654 (DPLRRTVEKYSMEPDPAGRDISIRPLLEHCENTHMT). A helical transmembrane segment spans residues 655-675 (IWLGIVYAYKGLLMLFGCFLA). Over 676–691 (WETRNVSIPALNDSKY) the chain is Cytoplasmic. Residues 692–712 (IGMSVYNVGIMCIIGAAVSFL) traverse the membrane as a helical segment. The Extracellular segment spans residues 713-720 (TRDQPNVQ). Residues 721 to 741 (FCIVALVIIFCSTITLCLVFV) form a helical membrane-spanning segment. Residues 742–941 (PKLITLRTNP…PSFRVMVSGL (200 aa)) lie on the Cytoplasmic side of the membrane. Residues 763–790 (TQNQKKEDSKTSTSVTSVNQASTSRLEG) form a disordered region. Polar residues predominate over residues 773-787 (TSTSVTSVNQASTSR). Phosphoserine occurs at positions 776 and 779. The stretch at 781-819 (NQASTSRLEGLQSENHRLRMKITELDKDLEEVTMQLQDT) forms a coiled coil. Position 819 is a phosphothreonine (threonine 819). 6 positions are modified to phosphoserine: serine 884, serine 893, serine 913, serine 916, serine 920, and serine 924.

Belongs to the G-protein coupled receptor 3 family. GABA-B receptor subfamily. As to quaternary structure, heterodimer of GABBR1 and GABBR2. Homodimers may form, but are inactive. Interacts (via C-terminus) with ATF4 (via leucine zipper domain). Highly expressed in brain, especially in cerebral cortex, thalamus, hippocampus, frontal, occipital and temporal lobe, occipital pole and cerebellum, followed by corpus callosum, caudate nucleus, spinal cord, amygdala and medulla. Weakly expressed in heart, testis and skeletal muscle.

It localises to the cell membrane. It is found in the postsynaptic cell membrane. In terms of biological role, component of a heterodimeric G-protein coupled receptor for GABA, formed by GABBR1 and GABBR2. Within the heterodimeric GABA receptor, only GABBR1 seems to bind agonists, while GABBR2 mediates coupling to G proteins. Ligand binding causes a conformation change that triggers signaling via guanine nucleotide-binding proteins (G proteins) and modulates the activity of down-stream effectors, such as adenylate cyclase. Signaling inhibits adenylate cyclase, stimulates phospholipase A2, activates potassium channels, inactivates voltage-dependent calcium-channels and modulates inositol phospholipid hydrolysis. Plays a critical role in the fine-tuning of inhibitory synaptic transmission. Pre-synaptic GABA receptor inhibits neurotransmitter release by down-regulating high-voltage activated calcium channels, whereas postsynaptic GABA receptor decreases neuronal excitability by activating a prominent inwardly rectifying potassium (Kir) conductance that underlies the late inhibitory postsynaptic potentials. Not only implicated in synaptic inhibition but also in hippocampal long-term potentiation, slow wave sleep, muscle relaxation and antinociception. The protein is Gamma-aminobutyric acid type B receptor subunit 2 (GABBR2) of Homo sapiens (Human).